Consider the following 546-residue polypeptide: Immunoglobulin-like domain-containing receptor 1 (546 aa).

An N-terminal signal peptide occupies residues Met-1–Ser-23. In terms of domain architecture, Ig-like V-type spans Leu-24–Lys-162. Over Leu-24–His-167 the chain is Extracellular. Cys-45 and Cys-145 form a disulfide bridge. Residues Trp-168 to Cys-188 form a helical membrane-spanning segment. Topologically, residues Trp-189–Ile-546 are cytoplasmic. The interval Trp-399–Ile-546 is disordered. Residues Arg-442 to Gln-457 show a composition bias toward basic and acidic residues. Basic residues predominate over residues Arg-458–Ser-467. 2 positions are modified to phosphoserine: Ser-499 and Ser-501. Residues Gly-527 to His-539 show a composition bias toward basic and acidic residues.

Belongs to the immunoglobulin superfamily. LISCH7 family. In terms of assembly, homooligomer. Interacts with MARVELD2 and OCLN; the interaction is required to recruit MARVELD2 to tricellular contacts. Interacts (via C-terminus) with TRA2A, TRA2B and SRSF1. Interacts with PLSCR1. In terms of tissue distribution, mainly expressed in prostate and to a lower extent in testis, pancreas, kidney, heart and liver.

The protein localises to the cell membrane. It localises to the cell junction. Its subcellular location is the tight junction. The protein resides in the cytoplasm. It is found in the cytosol. In terms of biological role, maintains epithelial barrier function by recruiting MARVELD2/tricellulin to tricellular tight junctions (tTJs). Crucial for normal hearing by maintaining the structural and functional integrity of tTJs, which are critical for the survival of auditory neurosensory HCs. Mediates fatty acids and lipoproteins-stimulated CCK/cholecystokinin secretion in the small intestine. In the inner ear, may regulate alternative pre-mRNA splicing via binding to TRA2A, TRA2B and SRSF1. Functionally, (Microbial infection) Promotes influenza virus infection by inhibiting viral nucleoprotein NP binding to PLSCR1 and thereby PLSCR1-mediated antiviral activity. The chain is Immunoglobulin-like domain-containing receptor 1 from Homo sapiens (Human).